The primary structure comprises 1929 residues: Genome polyprotein (1929 aa).

Residues 597 to 753 (DSVISHCAKR…MSFKYENPGQ (157 aa)) form the SF3 helicase domain. 623–630 (GPAGCGKT) provides a ligand contact to ATP. Tyrosine 1137 is subject to O-(5'-phospho-RNA)-tyrosine. The 157-residue stretch at 1235–1391 (GKIVNHVNAI…KIVIPVTKFK (157 aa)) folds into the Peptidase C24 domain. Catalysis depends on for 3CLpro activity residues histidine 1271, glutamate 1292, and cysteine 1355. The region spanning 1643–1768 (THRYCVDYSK…IVPNFVHSVM (126 aa)) is the RdRp catalytic domain.

In terms of assembly, homodimer. Interacts with NTPase, protein p30 and protease-polymerase p76. Interacts with capsid protein VP1 and protease-polymerase p76. Interacts with host IEF4e; this interaction plays a role in translation of viral proteins. As to quaternary structure, homooligomer. Interacts with Vpg, protein p32 and may interact with capsid protein VP1. Specific enzymatic cleavages in vivo yield mature proteins. Pro-Pol is first autocatalytically cleaved, then processes the whole polyprotein. In terms of processing, VPg is uridylylated by the polymerase and is covalently attached to the 5'-end of the polyadenylated genomic and subgenomic RNAs. This uridylylated form acts as a nucleotide-peptide primer for the polymerase.

The protein resides in the host endoplasmic reticulum membrane. It carries out the reaction a ribonucleoside 5'-triphosphate + H2O = a ribonucleoside 5'-diphosphate + phosphate + H(+). It catalyses the reaction RNA(n) + a ribonucleoside 5'-triphosphate = RNA(n+1) + diphosphate. The enzyme catalyses Endopeptidase with a preference for cleavage when the P1 position is occupied by Glu-|-Xaa and the P1' position is occupied by Gly-|-Yaa.. In terms of biological role, together with NTPase and NS4, initiates the formation of the replication complex. Induces the proliferation of the host smooth ER membranes forming long tubular structures. These remodeled membranes probably form the viral factories that contain the replication complex. Displays NTPase activity, but no helicase activity. Induces the formation of convoluted membranes derived from the host ER. These remodeled membranes probably form the viral factories that contain the replication complex. Together with NS2 and NS4, initiates the formation of the replication complex. Functionally, probable key protein responsible for the formation of membrane alterations by the virus. Induces the formation of convoluted membranes derived from the host ER. These remodeled membranes probably form the viral factories that contain the replication complex. Together with NS2 and NTPase, initiates the formation of the replication complex. Its function is as follows. Viral genome-linked protein is covalently linked to the 5'-end of the positive-strand, negative-strand genomic RNAs and subgenomic RNA. Acts as a genome-linked replication primer. May recruit ribosome to viral RNA thereby promoting viral proteins translation. Interacts with host translation initiation complex to allow the translation of viral proteins. In terms of biological role, protease-polymerase p76 processes the polyprotein: Pro-Pol is first released by autocleavage, then all other proteins are cleaved. Cleaves host translation initiation factor eIF4G1, eIF4G2 and PABP1 thereby inducing a shutdown of host protein synthesis. This shutdown may not prevent viral mRNA from being translated since viral Vpg replaces the cap. Also functions as an RNA-directed RNA polymerase, which replicates genomic and antigenomic viral RNA by recognizing specific signals. Also transcribes a subgenomic mRNA by initiating RNA synthesis internally on antigenomic RNA. This sgRNA codes for structural proteins. Catalyzes the covalent attachment VPg with viral RNAs. The polypeptide is Genome polyprotein (Canine calicivirus (strain 48) (CaCV)).